Consider the following 308-residue polypeptide: MIFATLEHILTHISFSIISIVIPTHLMTLVYEIVGLCDSSEKGMITTFFCITGLLVTRWIYSGHVPLSDLYESLMFLSWSFSLIHIVPYFRNYKNFFSKITAPSAILTQGFATSGLLTKMHQSAILVPALQSRWLMMHVSMMLLSYAALLCGSLLSITLLVITFRRKIDIFGKTNHLLISSFSFDETQYVNFSFRNYHRYQLTQRLDYWSYRVIGLGFTLLTIGILSGAVWANEAWGSYWNWDPKETWAFITWTVFAIYLHTRTNKSLQGANSAIVASMGFLIIWICYFGVNLLGRGLHSYGSFTLNI.

The next 7 helical transmembrane spans lie at 17–37, 43–63, 70–90, 142–162, 213–233, 246–260, and 274–294; these read IISIVIPTHLMTLVYEIVGLC, GMITTFFCITGLLVTRWIYSG, LYESLMFLSWSFSLIHIVPYF, MLLSYAALLCGSLLSITLLVI, VIGLGFTLLTIGILSGAVWAN, ETWAFITWTVFAIYL, and AIVASMGFLIIWICYFGVNLL.

It belongs to the CcmF/CycK/Ccl1/NrfE/CcsA family. May interact with Ccs1.

The protein resides in the plastid. It is found in the chloroplast thylakoid membrane. Its function is as follows. Required during biogenesis of c-type cytochromes (cytochrome c6 and cytochrome f) at the step of heme attachment. The sequence is that of Cytochrome c biogenesis protein CcsA from Nymphaea alba (White water-lily).